Reading from the N-terminus, the 600-residue chain is Aspartate--tRNA(Asp/Asn) ligase (600 aa).

Glu-187 contacts L-aspartate. Residues 211 to 214 (QIFK) form an aspartate region. L-aspartate is bound by residues Arg-233 and His-463. An ATP-binding site is contributed by 233-235 (RDE). Residue Glu-497 coordinates ATP. Arg-504 is an L-aspartate binding site. 549–552 (GVDR) is an ATP binding site.

It belongs to the class-II aminoacyl-tRNA synthetase family. Type 1 subfamily. Homodimer.

Its subcellular location is the cytoplasm. The enzyme catalyses tRNA(Asx) + L-aspartate + ATP = L-aspartyl-tRNA(Asx) + AMP + diphosphate. Aspartyl-tRNA synthetase with relaxed tRNA specificity since it is able to aspartylate not only its cognate tRNA(Asp) but also tRNA(Asn). Reaction proceeds in two steps: L-aspartate is first activated by ATP to form Asp-AMP and then transferred to the acceptor end of tRNA(Asp/Asn). The chain is Aspartate--tRNA(Asp/Asn) ligase from Wolbachia pipientis wMel.